The sequence spans 287 residues: uncharacterized protein (287 aa).

The ATP-grasp domain occupies 115 to 287 (SLLSKETIKS…KKFLKKKLIS (173 aa)).

This is an uncharacterized protein from Mycoplasma genitalium (strain ATCC 33530 / DSM 19775 / NCTC 10195 / G37) (Mycoplasmoides genitalium).